The following is a 679-amino-acid chain: G-protein-signaling modulator 2 (679 aa).

Residues 22 to 357 are important for interaction with NUMA1; INSC and FRMPD1; sequence ASCLELALEG…HLEISREVGD (336 aa). TPR repeat units lie at residues 24-57, 62-95, 102-135, 142-184, 202-235, 242-275, 282-315, and 322-355; these read CLELALEGERLCKSGDCRAGVSFFEAAVQVGTED, SAIYSQLGNAYFYLHDYAKALEYHHHDLTLARTI, AKASGNLGNTLKVLGNFDEAIVCCQRHLDISREL, ARAL…AVDL, GRAFGNLGNTHYLLGNFRDAVIAHEQRLLIAKEF, RRAYSNLGNAYIFLGEFETASEYYKKTLLLARQL, AQSCYSLGNTYTLLQDYEKAIDYHLKHLAIAQEL, and GRACWSLGNAYTALGNHDQAMHFAEKHLEISREV. Residues serine 408 and serine 484 each carry the phosphoserine modification. Threonine 487 is subject to Phosphothreonine. The GoLoco 1 domain maps to 490–512; the sequence is DEGFFDLLRRFQSNRMDDQRCHL. Residues serine 540 and serine 564 each carry the phosphoserine modification. GoLoco domains lie at 543-565, 594-616, and 628-650; these read TDEFLDLLASSQSRRLDDQRASF, DEDFFDILVKCQGSRLDDQRCAP, and DEDFFSLILRSQAKRMDEQRVLL. GDP contacts are provided by arginine 608, arginine 613, arginine 642, and arginine 647.

It belongs to the GPSM family. In terms of assembly, interacts with the dynein-dynactin complex; this interaction is inhibited in a PLK1-dependent manner. Part of a spindle orientation complex at least composed of GNAI1, GPSM2 and NUMA1. Interacts with LLGL2. Interacts (via TPR repeat region) with INSC/inscuteable. Interacts (via TPR repeat region) with NUMA1 (via C-terminus); this interaction is direct, inhibited in a PLK1-dependent manner and promotes spindle pole organization. INSC and NUMA1 compete for the same binding site, but INSC has higher affinity and can displace NUMA1 (in vitro). Interacts with GNAI2. Interacts (via GoLoco domains) with the GDP-bound form of GNAI1 and GNAI3; has much lower affinity for the GTP-bound form. Interaction with GDP-bound GNAI3 strongly enhances the affinity for NUMA1. Interacts (via TPR repeat region) with FRMPD1. INSC and FRMPD1 compete for the same binding site, but INSC has higher affinity and can displace FRMPD1 (in vitro). Interacts (via TPR repeat region) with FRMPD4. Identified in a complex with INSC and F2RL2/Par3. Interacts with TASOR. As to expression, detected in brain and liver (at protein level). Detected in brain, spleen, liver and testis, and at lower levels in heart, lung and kidney. Enriched in the ventricular zone of the developing central nervous systems. Expressed in proximal colon, ileum, ovary, Sertoli cells of the testis and granular cells within the cerebellum.

Its subcellular location is the cytoplasm. It is found in the cell cortex. The protein localises to the cytoskeleton. The protein resides in the spindle pole. It localises to the lateral cell membrane. In terms of biological role, plays an important role in mitotic spindle pole organization via its interaction with NUMA1. Required for cortical dynein-dynactin complex recruitment during metaphase. Plays a role in metaphase spindle orientation. Plays an important role in asymmetric cell divisions. Has guanine nucleotide dissociation inhibitor (GDI) activity towards G(i) alpha proteins, such as GNAI1 and GNAI3, and thereby regulates their activity. This chain is G-protein-signaling modulator 2 (Gpsm2), found in Mus musculus (Mouse).